The chain runs to 602 residues: MPSAKQRGSKGGHGAASPSEKGAHPSGGADDVAKKPPPAPQQPPPPPAPHPQQHPQQHPQNQAHGKGGHRGGGGGGGKSSSSSSASAAAAAAAASSSASCSRRLGRALNFLFYLALVAAAAFSGWCVHHVLEEVQQVRRSHQDFSRQREELGQGLQGVEQKVQSLQATFGTFESILRSSQHKQDLTEKAVKQGESEVSRISEVLQKLQNEILKDLSDGIHVVKDARERDFTSLENTVEERLTELTKSINDNIAIFTEVQKRSQKEINDMKAKVASLEESEGNKQDLKALKEAVKEIQTSAKSREWDMEALRSTLQTMESDIYTEVRELVSLKQEQQAFKEAADTERLALQALTEKLLRSEESVSRLPEEIRRLEEELRQLKSDSHGPKEDGGFRHSEAFEALQQKSQGLDSRLQHVEDGVLSMQVASARQTESLESLLSKSQEHEQRLAALQGRLEGLGSSEADQDGLASTVRSLGETQLVLYGDVEELKRSVGELPSTVESLQKVQEQVHTLLSQDQAQAARLPPQDFLDRLSSLDNLKASVSQVEADLKMLRTAVDSLVAYSVKIETNENNLESAKGLLDDLRNDLDRLFVKVEKIHEKV.

The segment at 1-83 (MPSAKQRGSK…GGGGKSSSSS (83 aa)) is disordered. Residues 1-106 (MPSAKQRGSK…SASCSRRLGR (106 aa)) are Cytoplasmic-facing. A phosphoserine mark is found at Ser-3, Ser-17, and Ser-19. The residue at position 21 (Lys-21) is an N6-acetyllysine. Pro residues predominate over residues 35 to 52 (KPPPAPQQPPPPPAPHPQ). Low complexity predominate over residues 53–64 (QHPQQHPQNQAH). Cys-100 carries S-palmitoyl cysteine; by ZDHHC2 lipidation. Residues 107 to 127 (ALNFLFYLALVAAAAFSGWCV) traverse the membrane as a helical segment. The Extracellular segment spans residues 128–602 (HHVLEEVQQV…VKVEKIHEKV (475 aa)). Positions 130–214 (VLEEVQQVRR…QKLQNEILKD (85 aa)) form a coiled coil. Position 232 is a phosphoserine; by FAM20C (Ser-232). 2 coiled-coil regions span residues 256 to 460 (TEVQ…GLGS) and 533 to 602 (LSSL…HEKV). Position 312 is a phosphoserine (Ser-312).

As to quaternary structure, interacts with REEP5. Post-translationally, reversibly palmitoylated. Palmitoylation at Cys-100 by ZDHHC2 is required for its trafficking from the ER to the plasma membrane and for its perinuclear localization. Palmitoylation by ZDHHC2 is also required for its function in APF-mediated antiproliferative signaling. Increased phosphorylation during mitosis prevents binding to microtubules.

It localises to the endoplasmic reticulum membrane. Its subcellular location is the cell membrane. The protein localises to the cytoplasm. It is found in the cytoskeleton. The protein resides in the perinuclear region. In terms of biological role, mediates the anchoring of the endoplasmic reticulum to microtubules. Functionally, high-affinity epithelial cell surface receptor for the FZD8-related low molecular weight sialoglycopeptide APF/antiproliferative factor. Mediates the APF antiproliferative signaling within cells. This Homo sapiens (Human) protein is Cytoskeleton-associated protein 4 (CKAP4).